The following is a 214-amino-acid chain: MGILLVDDHPMIRLGLAHFLGEGLNGLPVREAGSGEEALQQVQEELPGLVIMDFDLPGISGLETTRRLRQRLPQLRVLFFSEHTELGLVRQALDAGACGFLSKAAAPAVVLEAVRRVLAGHAYIEQPLATQLACQPHPGQGGGNARLQGLTQREIEVFLMLAKGTPTRLIAQQLCISAKTVSNYLTLLKSKLQVSSHAELVHLAIEAGLLRIAA.

The Response regulatory domain maps to 2-118 (GILLVDDHPM…VVLEAVRRVL (117 aa)). D53 carries the 4-aspartylphosphate modification. Residues 143–208 (GNARLQGLTQ…ELVHLAIEAG (66 aa)) form the HTH luxR-type domain. A DNA-binding region (H-T-H motif) is located at residues 167-186 (TRLIAQQLCISAKTVSNYLT).

In terms of biological role, positive regulator of the expression of the gene qedA and the activity of ADH I but does not affect the activities of ADH IIB or ADH IIG. In Pseudomonas putida (Arthrobacter siderocapsulatus), this protein is Transcriptional activator protein ExaE.